A 172-amino-acid chain; its full sequence is Peptidyl-prolyl cis-trans isomerase (172 aa).

The region spanning Tyr-10–Val-168 is the PPIase cyclophilin-type domain.

It belongs to the cyclophilin-type PPIase family.

It is found in the cytoplasm. It carries out the reaction [protein]-peptidylproline (omega=180) = [protein]-peptidylproline (omega=0). Functionally, PPIases accelerate the folding of proteins. They catalyze the cis-trans isomerization of proline imidic peptide bonds in oligopeptides. The sequence is that of Peptidyl-prolyl cis-trans isomerase (CPR1) from Encephalitozoon cuniculi (strain GB-M1) (Microsporidian parasite).